The chain runs to 398 residues: MRTPVILVAGQDHTDEVTGALLRRTGTVVVEHRFDGHVVRRMTATLSRGELITTEDALEFAHGCVSCTIRDDLLVLLRRLHRRDNVGRIVVHLAPWLEPQPICWAIDHVRVCVGHGYPDGPAALDVRVAAVVTCVDCVRWLPQSLGEDELPDGRTVAQVTVGQAEFADLLVLTHPEPVAVAVLRRLAPRARITGGVDRVELALAHLDDNSRRGRTDTPHTPLLAGLPPLAADGEVAIVEFSARRPFHPQRLHAAVDLLLDGVVRTRGRLWLANRPDQVMWLESAGGGLRVASAGKWLAAMAASEVAYVDLERRLFADLMWVYPFGDRHTAMTVLVCGADPTDIVNALNAALLSDDEMASPQRWQSYVDPFGDWHDDPCHEMPDAAGEFSAHRNSGESR.

A CobW C-terminal domain is found at 235-351 (VAIVEFSARR…DIVNALNAAL (117 aa)).

This is an uncharacterized protein from Mycobacterium bovis (strain ATCC BAA-935 / AF2122/97).